Here is a 286-residue protein sequence, read N- to C-terminus: E3 ubiquitin-protein ligase RNF170 (286 aa).

Topologically, residues 1 to 52 (MQRYWRFQDNKIQDICFGVLGESWIQRPVMARYYSEGQSLQQDDSFIEGVSD) are lumenal. A helical membrane pass occupies residues 53–73 (QVLVAVVVSLALTATLLYALL). Topologically, residues 74–229 (RNVQQNIHPE…GGLFWMFRIR (156 aa)) are cytoplasmic. Residues 115 to 158 (CPICLHQASFPVETNCGHLFCGSCIIAYWRYGSWLGAISCPICR) form an RING-type zinc finger. The chain crosses the membrane as a helical span at residues 230-250 (IMLCLMGAFFYLISPLDFVPE). A251 is a topological domain (lumenal). The helical transmembrane segment at 252–272 (LFGILGFLDDFFVIFLLLIYI) threads the bilayer. Topologically, residues 273 to 286 (SIMYREVITQRLTR) are cytoplasmic.

Constitutively associated with the ERLIN1/ERLIN 2 complex. Interacts with activated ITPR1.

The protein resides in the endoplasmic reticulum membrane. The enzyme catalyses S-ubiquitinyl-[E2 ubiquitin-conjugating enzyme]-L-cysteine + [acceptor protein]-L-lysine = [E2 ubiquitin-conjugating enzyme]-L-cysteine + N(6)-ubiquitinyl-[acceptor protein]-L-lysine.. Its pathway is protein modification; protein ubiquitination. Functionally, E3 ubiquitin-protein ligase that plays an essential role in stimulus-induced inositol 1,4,5-trisphosphate receptor type 1 (ITPR1) ubiquitination and degradation via the endoplasmic reticulum-associated degradation (ERAD) pathway. Also involved in ITPR1 turnover in resting cells. Selectively inhibits the TLR3-triggered innate immune response by promoting the 'Lys-48'-linked polyubiquitination and degradation of TLR3. This Mus musculus (Mouse) protein is E3 ubiquitin-protein ligase RNF170 (Rnf170).